A 654-amino-acid chain; its full sequence is tRNA 5-methylaminomethyl-2-thiouridine biosynthesis bifunctional protein MnmC (654 aa).

The tract at residues 1–236 is tRNA (mnm(5)s(2)U34)-methyltransferase; that stretch reads MSTLLQHAQI…KWEVMSGAYV (236 aa). The FAD-dependent cmnm(5)s(2)U34 oxidoreductase stretch occupies residues 262-654; sequence IGAGLAGSTT…FALRRLIRGK (393 aa).

In the N-terminal section; belongs to the methyltransferase superfamily. tRNA (mnm(5)s(2)U34)-methyltransferase family. The protein in the C-terminal section; belongs to the DAO family. FAD is required as a cofactor.

The protein localises to the cytoplasm. It carries out the reaction 5-aminomethyl-2-thiouridine(34) in tRNA + S-adenosyl-L-methionine = 5-methylaminomethyl-2-thiouridine(34) in tRNA + S-adenosyl-L-homocysteine + H(+). Catalyzes the last two steps in the biosynthesis of 5-methylaminomethyl-2-thiouridine (mnm(5)s(2)U) at the wobble position (U34) in tRNA. Catalyzes the FAD-dependent demodification of cmnm(5)s(2)U34 to nm(5)s(2)U34, followed by the transfer of a methyl group from S-adenosyl-L-methionine to nm(5)s(2)U34, to form mnm(5)s(2)U34. In Pseudomonas putida (strain GB-1), this protein is tRNA 5-methylaminomethyl-2-thiouridine biosynthesis bifunctional protein MnmC.